Here is a 391-residue protein sequence, read N- to C-terminus: Steroid 3-ketoacyl-CoA thiolase (391 aa).

Cys-93 (acyl-thioester intermediate) is an active-site residue. Residues Gln-151, 221 to 223 (RET), and Ser-246 each bind CoA. Residues His-347 and Cys-377 each act as proton acceptor in the active site. Gly-379 is a substrate binding site.

This sequence belongs to the thiolase-like superfamily. Thiolase family. In terms of assembly, dimer of dimers.

It catalyses the reaction an acyl-CoA + acetyl-CoA = a 3-oxoacyl-CoA + CoA. It carries out the reaction 3-oxochol-4-en-22-oyl-CoA + acetyl-CoA = 3,22-dioxochol-4-en-24-oyl-CoA + CoA. The protein operates within steroid metabolism; cholesterol degradation. In terms of biological role, involved in the beta-oxidation of the cholesterol side chain. It is important for utilization of cholesterol as a sole carbon source in vitro and for full virulence in the chronic stage of mouse lung infection. Catalyzes the thiolysis of 3,22-dioxochol-4-en-24-oyl-CoA to yield 3-oxo-4-pregnene-20-carboxyl-CoA (3-OPC-CoA) and acetyl-CoA. Also able to use acetoacetyl-CoA (AcAcCoA) as substrate. The sequence is that of Steroid 3-ketoacyl-CoA thiolase (fadA5) from Mycobacterium tuberculosis (strain ATCC 25618 / H37Rv).